Consider the following 1256-residue polypeptide: GPI inositol-deacylase (1256 aa).

Positions 37-48 are enriched in polar residues; it reads DVYANSTTNATA. The tract at residues 37 to 203 is disordered; sequence DVYANSTTNA…MEKEEEQKFV (167 aa). Residues Asn-41 and Asn-45 are each glycosylated (N-linked (GlcNAc...) asparagine). Residues 59–68 show a composition bias toward low complexity; that stretch reads PRPSRPSQSS. Polar residues predominate over residues 69–83; sequence AAERTSPESPSVRQS. Low complexity predominate over residues 107 to 135; it reads QSPSQQSQNQQQQQQQQQQQQQQQQQQQS. Residues 143–156 are compositionally biased toward polar residues; the sequence is SGNFNWKLSHSRNG. Asn-155 carries an N-linked (GlcNAc...) asparagine glycan. The span at 165 to 180 shows a compositional bias: low complexity; that stretch reads FFSSSFSHSPSTPPLS. Positions 190 to 202 are enriched in basic and acidic residues; sequence HSKEMEKEEEQKF. The helical transmembrane segment at 214–234 threads the bilayer; it reads AITFVTLLISILGIGFLALVL. Asn-235 carries an N-linked (GlcNAc...) asparagine glycan. Residue Ser-397 is part of the active site. An N-linked (GlcNAc...) asparagine glycan is attached at Asn-582. Helical transmembrane passes span 882 to 902 and 929 to 949; these read LYMR…TLVL and SIPL…NSSS. Residue Asn-960 is glycosylated (N-linked (GlcNAc...) asparagine). 6 helical membrane-spanning segments follow: residues 980–1000, 1005–1025, 1053–1073, 1103–1123, 1130–1150, and 1172–1192; these read PFFW…CTVF, LTLV…PGWI, ILLV…VCCL, SILL…VVWI, WLTP…IILV, and VLLF…AYML. Asn-1212, Asn-1239, and Asn-1242 each carry an N-linked (GlcNAc...) asparagine glycan.

The protein belongs to the GPI inositol-deacylase family.

It is found in the endoplasmic reticulum membrane. In terms of biological role, involved in inositol deacylation of GPI-anchored proteins which plays important roles in the quality control and ER-associated degradation of GPI-anchored proteins. The polypeptide is GPI inositol-deacylase (bst-1) (Neurospora crassa (strain ATCC 24698 / 74-OR23-1A / CBS 708.71 / DSM 1257 / FGSC 987)).